We begin with the raw amino-acid sequence, 192 residues long: Large ribosomal subunit protein bL9 (192 aa).

Residues 173-192 (ALRPEDFFDPEADGVDEDEA) are disordered. Residues 179–192 (FFDPEADGVDEDEA) show a composition bias toward acidic residues.

Belongs to the bacterial ribosomal protein bL9 family.

Functionally, binds to the 23S rRNA. The chain is Large ribosomal subunit protein bL9 (rplI) from Rhizobium leguminosarum bv. trifolii.